We begin with the raw amino-acid sequence, 615 residues long: DNA mismatch repair protein MutL (615 aa).

A disordered region spans residues 362-397; the sequence is HFAEPAVREPVAPRYSPAPASGSRPAAPWPNAQPGY. Positions 373–387 are enriched in low complexity; sequence APRYSPAPASGSRPA.

It belongs to the DNA mismatch repair MutL/HexB family.

Functionally, this protein is involved in the repair of mismatches in DNA. It is required for dam-dependent methyl-directed DNA mismatch repair. May act as a 'molecular matchmaker', a protein that promotes the formation of a stable complex between two or more DNA-binding proteins in an ATP-dependent manner without itself being part of a final effector complex. The chain is DNA mismatch repair protein MutL from Escherichia coli O81 (strain ED1a).